The chain runs to 233 residues: Ribose-5-phosphate isomerase A (233 aa).

Substrate-binding positions include 28 to 31, 83 to 86, and 96 to 99; these read SGST, DGAD, and KGGG. The Proton acceptor role is filled by glutamate 105. Lysine 123 contributes to the substrate binding site.

It belongs to the ribose 5-phosphate isomerase family. Homodimer.

It catalyses the reaction aldehydo-D-ribose 5-phosphate = D-ribulose 5-phosphate. The protein operates within carbohydrate degradation; pentose phosphate pathway; D-ribose 5-phosphate from D-ribulose 5-phosphate (non-oxidative stage): step 1/1. Functionally, catalyzes the reversible conversion of ribose-5-phosphate to ribulose 5-phosphate. The polypeptide is Ribose-5-phosphate isomerase A (Maricaulis maris (strain MCS10) (Caulobacter maris)).